Consider the following 228-residue polypeptide: Cytidylate kinase (228 aa).

Residue 10 to 18 participates in ATP binding; it reads GPSGSGKGT.

The protein belongs to the cytidylate kinase family. Type 1 subfamily.

Its subcellular location is the cytoplasm. It carries out the reaction CMP + ATP = CDP + ADP. It catalyses the reaction dCMP + ATP = dCDP + ADP. The protein is Cytidylate kinase of Acinetobacter baumannii (strain AB0057).